The sequence spans 427 residues: Probable protein phosphatase 2C 64 (427 aa).

The segment at 1–36 (MGNCVARSGTAVDAGGDGGEDGKRRRRRWKAPREDQ) is disordered. In terms of domain architecture, PPM-type phosphatase spans 53-331 (TATVYTQQGR…DDCAVVCLYL (279 aa)). Mn(2+)-binding residues include D89, G90, D276, and D322.

Belongs to the PP2C family. Mg(2+) serves as cofactor. Requires Mn(2+) as cofactor.

It carries out the reaction O-phospho-L-seryl-[protein] + H2O = L-seryl-[protein] + phosphate. The catalysed reaction is O-phospho-L-threonyl-[protein] + H2O = L-threonyl-[protein] + phosphate. The sequence is that of Probable protein phosphatase 2C 64 from Oryza sativa subsp. japonica (Rice).